The following is a 346-amino-acid chain: Ribulose-5-phosphate reductase (346 aa).

Cysteine 45, histidine 71, glutamate 72, and glutamate 151 together coordinate Zn(2+).

The protein belongs to the zinc-containing alcohol dehydrogenase family. The cofactor is Zn(2+).

It catalyses the reaction D-ribitol 5-phosphate + NADP(+) = D-ribulose 5-phosphate + NADPH + H(+). The protein operates within cell wall biogenesis; poly(ribitol phosphate) teichoic acid biosynthesis. Its function is as follows. Catalyzes the NADPH dependent reduction of D-ribulose 5-phosphate to D-ribitol 5-phosphate. This Streptococcus pneumoniae (strain ATCC BAA-255 / R6) protein is Ribulose-5-phosphate reductase.